Consider the following 373-residue polypeptide: Putative F-box/kelch-repeat protein At3g19410 (373 aa).

The F-box domain maps to 1–46; the sequence is MTIPELPKDLIEEILCYVPATYLKRLRSTCKGWNRLFKDDRRFAKK. Kelch repeat units lie at residues 101 to 148, 149 to 200, and 329 to 373; these read RIFH…FVLG, YYQE…QCVS, and KLYI…EEKS.

The protein is Putative F-box/kelch-repeat protein At3g19410 of Arabidopsis thaliana (Mouse-ear cress).